The primary structure comprises 758 residues: Calpain (758 aa).

The region spanning leucine 99 to glycine 397 is the Calpain catalytic domain. Residues cysteine 154, histidine 313, and asparagine 337 contribute to the active site. Positions leucine 398–glutamate 562 are domain III. The linker stretch occupies residues aspartate 563–threonine 582. Residues leucine 583 to tyrosine 757 are domain IV. Residues aspartate 641, asparagine 643, threonine 645, histidine 647, glutamate 652, aspartate 671, aspartate 673, serine 675, tyrosine 677, and glutamate 682 each coordinate Ca(2+). 2 consecutive EF-hand domains span residues isoleucine 658–histidine 693 and valine 694–alanine 729.

This sequence belongs to the peptidase C2 family.

Its activity is regulated as follows. Activated by free cytoplasmic calcium. Calpains are calcium-activated non-lysosomal thiol-proteases. The sequence is that of Calpain from Schistosoma mansoni (Blood fluke).